The following is a 607-amino-acid chain: Elongation factor 4 (607 aa).

In terms of domain architecture, tr-type G spans 11–193 (EKIRNFSIIA…QIVEKVPAPQ (183 aa)). GTP contacts are provided by residues 23–28 (DHGKST) and 140–143 (NKID).

It belongs to the TRAFAC class translation factor GTPase superfamily. Classic translation factor GTPase family. LepA subfamily.

It is found in the cell membrane. The catalysed reaction is GTP + H2O = GDP + phosphate + H(+). Functionally, required for accurate and efficient protein synthesis under certain stress conditions. May act as a fidelity factor of the translation reaction, by catalyzing a one-codon backward translocation of tRNAs on improperly translocated ribosomes. Back-translocation proceeds from a post-translocation (POST) complex to a pre-translocation (PRE) complex, thus giving elongation factor G a second chance to translocate the tRNAs correctly. Binds to ribosomes in a GTP-dependent manner. This chain is Elongation factor 4, found in Lactococcus lactis subsp. lactis (strain IL1403) (Streptococcus lactis).